Reading from the N-terminus, the 259-residue chain is Type III pantothenate kinase (259 aa).

ATP is bound at residue 9–16 (DAGNSRIK). Residues Tyr-93 and 100–103 (GSDR) each bind substrate. The Proton acceptor role is filled by Asp-102. Position 126 (Thr-126) interacts with ATP. Position 190 (Thr-190) interacts with substrate.

Belongs to the type III pantothenate kinase family. As to quaternary structure, homodimer. NH4(+) is required as a cofactor. K(+) serves as cofactor.

The protein localises to the cytoplasm. It carries out the reaction (R)-pantothenate + ATP = (R)-4'-phosphopantothenate + ADP + H(+). It participates in cofactor biosynthesis; coenzyme A biosynthesis; CoA from (R)-pantothenate: step 1/5. Its function is as follows. Catalyzes the phosphorylation of pantothenate (Pan), the first step in CoA biosynthesis. This chain is Type III pantothenate kinase, found in Burkholderia pseudomallei (strain K96243).